Here is an 85-residue protein sequence, read N- to C-terminus: MPSVTQRLRDPDINPCLSESDASTRCLDENNYDRERCSTYFLRYKNCRRFWNSIVMQRRKNGVKPFMPTAAERDEILRAVGNMPY.

Residues 13-55 enclose the CHCH domain; the sequence is INPCLSESDASTRCLDENNYDRERCSTYFLRYKNCRRFWNSIV. 2 consecutive short sequence motifs (cx9C motif) follow at residues 16 to 26 and 37 to 47; these read CLSESDASTRC and CSTYFLRYKNC. Disulfide bonds link cysteine 16-cysteine 47 and cysteine 26-cysteine 37.

It belongs to the CHCHD7 family. As to quaternary structure, monomer.

The protein localises to the mitochondrion intermembrane space. The polypeptide is Coiled-coil-helix-coiled-coil-helix domain-containing protein 7 (CHCHD7) (Homo sapiens (Human)).